Consider the following 592-residue polypeptide: Aspartate--tRNA(Asp/Asn) ligase (592 aa).

Glu-173 contacts L-aspartate. Residues 197–200 (QLFK) are aspartate. Residue Arg-219 participates in L-aspartate binding. Residues 219–221 (RDE) and Gln-228 each bind ATP. An L-aspartate-binding site is contributed by His-448. Residue Glu-481 participates in ATP binding. Arg-488 serves as a coordination point for L-aspartate. 533-536 (GLDR) contacts ATP.

It belongs to the class-II aminoacyl-tRNA synthetase family. Type 1 subfamily. Homodimer.

The protein resides in the cytoplasm. It catalyses the reaction tRNA(Asx) + L-aspartate + ATP = L-aspartyl-tRNA(Asx) + AMP + diphosphate. Functionally, aspartyl-tRNA synthetase with relaxed tRNA specificity since it is able to aspartylate not only its cognate tRNA(Asp) but also tRNA(Asn). Reaction proceeds in two steps: L-aspartate is first activated by ATP to form Asp-AMP and then transferred to the acceptor end of tRNA(Asp/Asn). This chain is Aspartate--tRNA(Asp/Asn) ligase, found in Chromohalobacter salexigens (strain ATCC BAA-138 / DSM 3043 / CIP 106854 / NCIMB 13768 / 1H11).